Reading from the N-terminus, the 814-residue chain is Oxysterol-binding protein-related protein 1C (814 aa).

In terms of domain architecture, PH spans 103 to 235 (GNGIAGILYK…WVEALQAVKD (133 aa)). A coiled-coil region spans residues 300-367 (LLIDTLRQLE…AEEEFDEEEN (68 aa)). 2 disordered regions span residues 319–366 (VVDE…DEEE) and 379–411 (SSFK…PSIK). Positions 347 to 366 (ESDDDNERGDAAEEEFDEEE) are enriched in acidic residues. The span at 379 to 394 (SSFKSSGSGFRTSSFS) shows a compositional bias: low complexity. A compositionally biased stretch (acidic residues) spans 395–407 (SDEDGFESEDDID).

It belongs to the OSBP family. In terms of tissue distribution, expressed in roots, leaves, stems, flowers and pollen.

Its function is as follows. May be involved in the transport of sterols. The chain is Oxysterol-binding protein-related protein 1C (ORP1C) from Arabidopsis thaliana (Mouse-ear cress).